The primary structure comprises 261 residues: Ribonuclease PH (261 aa).

Phosphate contacts are provided by residues Arg-87 and 125-127 (GTR).

This sequence belongs to the RNase PH family. Homohexameric ring arranged as a trimer of dimers.

It catalyses the reaction tRNA(n+1) + phosphate = tRNA(n) + a ribonucleoside 5'-diphosphate. Its function is as follows. Phosphorolytic 3'-5' exoribonuclease that plays an important role in tRNA 3'-end maturation. Removes nucleotide residues following the 3'-CCA terminus of tRNAs; can also add nucleotides to the ends of RNA molecules by using nucleoside diphosphates as substrates, but this may not be physiologically important. Probably plays a role in initiation of 16S rRNA degradation (leading to ribosome degradation) during starvation. This is Ribonuclease PH from Caldanaerobacter subterraneus subsp. tengcongensis (strain DSM 15242 / JCM 11007 / NBRC 100824 / MB4) (Thermoanaerobacter tengcongensis).